The primary structure comprises 193 residues: Imidazoleglycerol-phosphate dehydratase (193 aa).

It belongs to the imidazoleglycerol-phosphate dehydratase family.

It is found in the cytoplasm. It catalyses the reaction D-erythro-1-(imidazol-4-yl)glycerol 3-phosphate = 3-(imidazol-4-yl)-2-oxopropyl phosphate + H2O. It functions in the pathway amino-acid biosynthesis; L-histidine biosynthesis; L-histidine from 5-phospho-alpha-D-ribose 1-diphosphate: step 6/9. This Methanospirillum hungatei JF-1 (strain ATCC 27890 / DSM 864 / NBRC 100397 / JF-1) protein is Imidazoleglycerol-phosphate dehydratase.